The chain runs to 106 residues: Terpredoxin (106 aa).

The region spanning Pro2 to Ala106 is the 2Fe-2S ferredoxin-type domain. Positions 40, 46, 49, and 87 each coordinate [2Fe-2S] cluster.

Belongs to the adrenodoxin/putidaredoxin family. It depends on [2Fe-2S] cluster as a cofactor.

Its function is as follows. The oxidation of alpha-terpineol by cytochrome p450-TERP requires the participation of a flavoprotein, terpredoxin reductase, and an iron-sulfur protein, terpredoxin, to mediate the transfer of electrons from NADH to P450 for oxygen activation. In Pseudomonas sp, this protein is Terpredoxin (terPB).